Consider the following 606-residue polypeptide: MPVTEVGSLPELNNILERSDANRLIIIDFFANWCGPCRMISPIFEQFSAEYGNATFLKVNCDVARDIVQRYNISAMPTFIFLKNRQQVDMVRGANQQAIAEKIRQHYSPTPANPNAASDSEKRFLEQFVKCSNVPRSYQDEVFKALARSVMPEELVGRAMTEGPRDEKAILKDLLHWFKTQFFTWFDRPTCPKCTLKCSTDGLQGTPTREEQKEGGASRVEVYICDGCNTEMRFPRYNNPAKLLQTRTGRCGEWANCFGLLLAALNLESRFIYDTTDHVWNEVYLLAEQRWCHVDPCENTMDRPLLYTRGWGKTLGYCIGYGSDHVVDVTWRYIWDSKKLVTQRNEVRQPVFENFLSKLNSRQAEGQTEPRKRELAVRRVCELMEMMAQEAKNHKIGWEKIGDDLGGRITGSEEWRRERGELGESGPKLLAEPIKLAPPTGPAQNYLEFNYDVITDTYSQPPEIGFSAQAFELENVQRVEETDWNMTYLCRKRGDAPGNISWHFDLKSLKKSIEKIEIRMAGIQKFEKGKAMAIACLGDSCMRLPIDCSALTIEDPKNAEILKITATLSGGEGAIGFQQAQIFRTELKRGGGARTESFSVKIWMKN.

The region spanning 2–108 (PVTEVGSLPE…IAEKIRQHYS (107 aa)) is the Thioredoxin domain. Positions 191, 194, 225, and 228 each coordinate Zn(2+). Cys-251 functions as the Nucleophile in the catalytic mechanism. Active-site residues include His-278 and Asp-295. Residues 404-606 (DLGGRITGSE…SFSVKIWMKN (203 aa)) form the PAW domain.

It belongs to the transglutaminase-like superfamily. PNGase family. Zn(2+) is required as a cofactor.

Its subcellular location is the cytoplasm. The protein resides in the endoplasmic reticulum. The enzyme catalyses Hydrolysis of an N(4)-(acetyl-beta-D-glucosaminyl)asparagine residue in which the glucosamine residue may be further glycosylated, to yield a (substituted) N-acetyl-beta-D-glucosaminylamine and a peptide containing an aspartate residue.. Its activity is regulated as follows. Inhibited by Zn(2+) and z-VAD-fmk (caspase inhibitor) but unaffected by EDTA. Its function is as follows. Specifically deglycosylates the denatured form of N-linked glycoproteins in the cytoplasm and assists their proteasome-mediated degradation. Cleaves the beta-aspartyl-glucosamine (GlcNAc) of the glycan and the amide side chain of Asn, converting Asn to Asp. Prefers proteins containing high-mannose over those bearing complex type oligosaccharides. Can recognize misfolded proteins in the endoplasmic reticulum that are exported to the cytosol to be destroyed and deglycosylate them, while it has no activity toward native proteins. Deglycosylation is a prerequisite for subsequent proteasome-mediated degradation of some, but not all, misfolded glycoproteins. Also displays oxidoreductase (thioredoxin) activity. Involved in regulating the expression of proteasomal subunits such as rpt-3 in order to confer resistance to proteasomal dysfunction. In Caenorhabditis elegans, this protein is Peptide-N(4)-(N-acetyl-beta-glucosaminyl)asparagine amidase (png-1).